Consider the following 337-residue polypeptide: Inositol 2-dehydrogenase (337 aa).

Belongs to the Gfo/Idh/MocA family. Homotetramer.

It carries out the reaction myo-inositol + NAD(+) = scyllo-inosose + NADH + H(+). In terms of biological role, involved in the oxidation of myo-inositol (MI) to 2-keto-myo-inositol (2KMI or 2-inosose). This chain is Inositol 2-dehydrogenase, found in Burkholderia multivorans (strain ATCC 17616 / 249).